The chain runs to 326 residues: Flotillin-like protein FloA (326 aa).

The next 2 membrane-spanning stretches (helical) occupy residues 6-26 (IILF…GSSV) and 27-47 (SLWI…IVFM).

This sequence belongs to the flotillin-like FloA family. Homooligomerizes.

It is found in the cell membrane. The protein localises to the membrane raft. Its function is as follows. Found in functional membrane microdomains (FMM) that may be equivalent to eukaryotic membrane rafts. FMMs are highly dynamic and increase in number as cells age. Flotillins are thought to be important factors in membrane fluidity. The sequence is that of Flotillin-like protein FloA from Desulfosudis oleivorans (strain DSM 6200 / JCM 39069 / Hxd3) (Desulfococcus oleovorans).